The following is a 227-amino-acid chain: PKHD-type hydroxylase A1S_0473 (227 aa).

One can recognise a Fe2OG dioxygenase domain in the interval 78–178; that stretch reads KIIPPLFNRY…RFASFFWVQS (101 aa). Residues His-96, Asp-98, and His-159 each contribute to the Fe cation site. Arg-169 is a binding site for 2-oxoglutarate.

Requires Fe(2+) as cofactor. The cofactor is L-ascorbate.

This is PKHD-type hydroxylase A1S_0473 from Acinetobacter baumannii (strain ATCC 17978 / DSM 105126 / CIP 53.77 / LMG 1025 / NCDC KC755 / 5377).